The sequence spans 845 residues: MAALQRFPLSKGWSFKDSEDKSEDAWMPVPVVPSVVQQDLQANNKLKDPYIGFNELETRWVNEKSWTYKTTFQKPAVPAGSAIFLAFDGLDTFATVKLDGNVILESDNMFLAHRLDVTKALEAEGDHSLEIDFDCAFLRAKELRKQDSKHNWASFNGDPSRLSVRKSQYHWGWDWGPVLMTAGIWREVRLEVYTARVADLWTDVQLASDHQNAQITAFAEVESVNSDAHKARFTLSLHGQELGREEVSVSEDGSAKVSFDVKSPSLWWPHGYGDATLYEVSVSLVKDQDEVHQVSKKFGIRTAEVVQQPDKHGKSFFFRVNGVDIFCGGSCWIPADNYLPSVTADRYRKWIELMVHGRQVMIRVWGGGNYEDDSFYDACDELGVLVWQDFMFGCGNYPTWPNLLESIRKESVYNVRRLRHHPSIVVWVGNNEDYQVQESAGLTYDFEDKNPENWLKTDFPARYIYEKILPEVVEEYSPSTFYHPGSPWGDGKTTSDPTVGDMHQWNVWHGTQEKYQIFDTLGGRFNSEFGMEAFPHMSTIDYFVENEADKFPQSHVLDFHNKADGHERRIATYLVENLRTATDLETHVYLTQVVQAETMMFGYRGWRRQWGDERHCGGALLWQLNDCWPTISWAIVDYFLRPKPAFYAVARVLNPIAVGVRREHHDWSVTHAQPPKTSKFELWVASSLQKEVQGTVELRFLSINTGLEVRERIVHENVSIVPNGTTNLIVDGLIDYKVHPEPHVLAVRIWVNGELVARDVDWPQPFKYLDLSNRGLEVKLVSESENEQTLLLSAQKPVKCLVFEEREGVRISDSAIDIVPGDEQRVTIKGMKPGDAPLKYKFLGQ.

Glu432 functions as the Proton donor in the catalytic mechanism. N-linked (GlcNAc...) asparagine glycans are attached at residues Asn717 and Asn723.

It belongs to the glycosyl hydrolase 2 family. Beta-mannosidase B subfamily.

The catalysed reaction is Hydrolysis of terminal, non-reducing beta-D-mannose residues in beta-D-mannosides.. It functions in the pathway glycan metabolism; N-glycan degradation. Its function is as follows. Exoglycosidase that cleaves the single beta-linked mannose residue from the non-reducing end of beta-mannosidic oligosaccharides of various complexity and length. Prefers mannobiose over mannotriose and has no activity against polymeric mannan. Is also severely restricted by galactosyl substitutions at the +1 subsite. The protein is Beta-mannosidase B (mndB) of Aspergillus clavatus (strain ATCC 1007 / CBS 513.65 / DSM 816 / NCTC 3887 / NRRL 1 / QM 1276 / 107).